The primary structure comprises 349 residues: 11-beta-hydroxysteroid dehydrogenase A (349 aa).

A helical; Signal-anchor for type II membrane protein transmembrane segment spans residues 10 to 30; it reads LVAPPFTFFFLCLFLPPYWGL. The Proline-knob motif lies at 13 to 26; sequence PPFTFFFLCLFLPP. Residues 54–80, aspartate 105, and 132–135 each bind NADP(+); these read GASS…SARR and NAAI. Serine 184 contacts substrate. Tyrosine 197 serves as the catalytic Proton acceptor. Residues 197-201 and lysine 201 contribute to the NADP(+) site; that span reads YSASK.

This sequence belongs to the short-chain dehydrogenases/reductases (SDR) family. Expressed in seeds (at protein level).

It is found in the lipid droplet. The protein localises to the membrane. It catalyses the reaction an 11beta-hydroxysteroid + NADP(+) = an 11-oxosteroid + NADPH + H(+). Functionally, has dehydrogenase activity against 11 beta-hydroxysteroid and 17 beta-hydroxysteroid. May be involved in signal transduction regulated by various sterols. This Arachis hypogaea (Peanut) protein is 11-beta-hydroxysteroid dehydrogenase A.